Here is a 167-residue protein sequence, read N- to C-terminus: Putative lipoprotein YteS (167 aa).

Residues 1–20 form the signal peptide; the sequence is MTKRIRTALCVIVSVLFLAS. A lipid anchor (N-palmitoyl cysteine) is attached at C21. C21 carries S-diacylglycerol cysteine lipidation.

The protein resides in the cell membrane. May play a role in the degradation of type I rhamnogalacturonan derived from plant cell walls. This chain is Putative lipoprotein YteS (yteS), found in Bacillus subtilis (strain 168).